The primary structure comprises 814 residues: Kinesin-like protein KIF6 (814 aa).

A Kinesin motor domain is found at T5–I345. ATP is bound at residue G97–T104. Coiled coils occupy residues N356–E385, L456–H494, and E588–E683. Residues L752–D788 are disordered. A compositionally biased stretch (polar residues) spans P759–L771.

This sequence belongs to the TRAFAC class myosin-kinesin ATPase superfamily. Kinesin family.

The protein localises to the cytoplasm. The protein resides in the cytoskeleton. The polypeptide is Kinesin-like protein KIF6 (KIF6) (Homo sapiens (Human)).